We begin with the raw amino-acid sequence, 166 residues long: Interferon gamma (166 aa).

The N-terminal stretch at 1 to 23 is a signal peptide; sequence MKYTSSFLALLLSVLLGFSGSYG. The residue at position 24 (glutamine 24) is a Pyrrolidone carboxylic acid. N-linked (GlcNAc...) asparagine glycosylation is found at asparagine 39 and asparagine 106.

It belongs to the type II (or gamma) interferon family. In terms of assembly, homodimer. Interacts with IFNGR1 (via extracellular domain); this interaction promotes IFNGR1 dimerization. Released primarily from activated T lymphocytes.

The protein localises to the secreted. Its function is as follows. Type II interferon produced by immune cells such as T-cells and NK cells that plays crucial roles in antimicrobial, antiviral, and antitumor responses by activating effector immune cells and enhancing antigen presentation. Primarily signals through the JAK-STAT pathway after interaction with its receptor IFNGR1 to affect gene regulation. Upon IFNG binding, IFNGR1 intracellular domain opens out to allow association of downstream signaling components JAK2, JAK1 and STAT1, leading to STAT1 activation, nuclear translocation and transcription of IFNG-regulated genes. Many of the induced genes are transcription factors such as IRF1 that are able to further drive regulation of a next wave of transcription. Plays a role in class I antigen presentation pathway by inducing a replacement of catalytic proteasome subunits with immunoproteasome subunits. In turn, increases the quantity, quality, and repertoire of peptides for class I MHC loading. Increases the efficiency of peptide generation also by inducing the expression of activator PA28 that associates with the proteasome and alters its proteolytic cleavage preference. Up-regulates as well MHC II complexes on the cell surface by promoting expression of several key molecules such as cathepsins B/CTSB, H/CTSH, and L/CTSL. Participates in the regulation of hematopoietic stem cells during development and under homeostatic conditions by affecting their development, quiescence, and differentiation. In Capra hircus (Goat), this protein is Interferon gamma (IFNG).